A 159-amino-acid chain; its full sequence is MTNGNGTPPETAPSPQLNVLAQYTKDFSFENPNSPASLAPQQQPPSINVQINVGASNVAENDYEVVLKVEGKAEHAGKLMFSFELAYAGVFRIVNVPQENLHPLVMIECPRLLFPFAREIVATAVRDGGFPPLMLDPIDFVSLYRQNMERQAAAQQQPS.

The protein belongs to the SecB family. In terms of assembly, homotetramer, a dimer of dimers. One homotetramer interacts with 1 SecA dimer.

The protein resides in the cytoplasm. Its function is as follows. One of the proteins required for the normal export of preproteins out of the cell cytoplasm. It is a molecular chaperone that binds to a subset of precursor proteins, maintaining them in a translocation-competent state. It also specifically binds to its receptor SecA. This is Protein-export protein SecB from Nitrobacter winogradskyi (strain ATCC 25391 / DSM 10237 / CIP 104748 / NCIMB 11846 / Nb-255).